Consider the following 543-residue polypeptide: Tubby-related protein 1 (543 aa).

The interval 1–290 (MPLQEETLRE…RASSPPVEVG (290 aa)) is disordered. Basic and acidic residues-rich tracts occupy residues 46–56 (PETPDSLESKP) and 86–99 (FLRD…DPRE). Composition is skewed to acidic residues over residues 110–132 (GGEE…EEEE) and 244–255 (KKEEEEEVEEEV). The span at 267–276 (GRAKGKGKKK) shows a compositional bias: basic residues.

Belongs to the TUB family. As to quaternary structure, homodimer. May interact with ABCF1, PSIP1, ZEB1 and HMGB2 (Potential). Interacts with F-actin. Interacts with DNM1. Interacts with TUB. Interacts with TYRO3. As to expression, retina specific. Detected in the outer plexiform layer in photoreceptor cells (at protein level).

Its subcellular location is the cytoplasm. The protein resides in the cell membrane. It is found in the secreted. It localises to the synapse. Its function is as follows. Required for normal development of photoreceptor synapses. Required for normal photoreceptor function and for long-term survival of photoreceptor cells. Interacts with cytoskeleton proteins and may play a role in protein transport in photoreceptor cells. Binds lipids, especially phosphatidylinositol 3-phosphate, phosphatidylinositol 4-phosphate, phosphatidylinositol 5-phosphate, phosphatidylinositol 3,4-bisphosphate, phosphatidylinositol 4,5-bisphosphate, phosphatidylinositol 3,4,5-bisphosphate, phosphatidylserine and phosphatidic acid (in vitro). Contribute to stimulation of phagocytosis of apoptotic retinal pigment epithelium (RPE) cells and macrophages. This Mus musculus (Mouse) protein is Tubby-related protein 1 (Tulp1).